The chain runs to 473 residues: Adhesive plaque matrix protein 2 (473 aa).

The signal sequence occupies residues Met-1–Gly-17. Tyr-23, Tyr-31, Tyr-36, and Tyr-43 each carry 3',4'-dihydroxyphenylalanine. 11 EGF-like domains span residues Pro-45–Asn-81, Leu-82–Cys-117, Glu-118–Cys-154, Glu-155–Cys-191, Gln-192–Cys-228, Glu-229–Cys-265, Lys-266–Cys-301, Gly-302–Glu-340, Lys-342–Thr-378, Lys-383–Thr-420, and Lys-425–Ser-461. 33 cysteine pairs are disulfide-bonded: Cys-49/Cys-60, Cys-54/Cys-69, Cys-71/Cys-80, Cys-86/Cys-97, Cys-91/Cys-106, Cys-108/Cys-117, Cys-122/Cys-133, Cys-127/Cys-143, Cys-145/Cys-154, Cys-159/Cys-170, Cys-164/Cys-180, Cys-182/Cys-191, Cys-196/Cys-207, Cys-201/Cys-217, Cys-219/Cys-228, Cys-233/Cys-244, Cys-238/Cys-254, Cys-256/Cys-265, Cys-270/Cys-281, Cys-275/Cys-290, Cys-292/Cys-301, Cys-306/Cys-317, Cys-311/Cys-328, Cys-330/Cys-339, Cys-346/Cys-357, Cys-351/Cys-366, Cys-368/Cys-377, Cys-387/Cys-399, Cys-393/Cys-408, Cys-410/Cys-419, Cys-429/Cys-440, Cys-434/Cys-449, and Cys-451/Cys-460. A glycan (N-linked (GlcNAc...) asparagine) is linked at Asn-93.

In terms of processing, contains L-DOPA (3',4'-dihydroxyphenylalanine). Produced by the byssal gland.

The protein resides in the secreted. Functionally, provides adhesiveness to the mussel's foot. Mussels produce one of the strongest water insoluble glues. The mussel's adhesive is a bundle of threads, called a byssus, formed by a fibrous collagenous core coated with adhesive proteins. The protein is Adhesive plaque matrix protein 2 (FP2) of Mytilus galloprovincialis (Mediterranean mussel).